The sequence spans 282 residues: Tetraspanin-6 (282 aa).

The Cytoplasmic segment spans residues 1–7 (MYRFSNT). Residues 8-28 (VIGVLNLLTLLASIPIIGTAL) traverse the membrane as a helical segment. Residues 29–44 (YKARSSTTCENFLQTP) lie on the Extracellular side of the membrane. The helical transmembrane segment at 45 to 65 (LLVIGFIILIVSLAGFIGACF) threads the bilayer. Residues 66 to 74 (NVAWALWVY) are Cytoplasmic-facing. The chain crosses the membrane as a helical span at residues 75-95 (LVVMIFLIATLMGLTLFGLVV). At 96–220 (TSQGGGVEVP…EIRLDWRKLS (125 aa)) the chain is on the extracellular side. A helical membrane pass occupies residues 221 to 241 (VVNILVLVLLIAVYAAGCCAF). Over 242–282 (HNTRHAAHPYHPSDDNRMTRVRPRWDYYWWRWWHEKKEQLY) the chain is Cytoplasmic.

It belongs to the tetraspanin (TM4SF) family.

The protein localises to the membrane. In terms of biological role, may be involved in the regulation of cell differentiation. The chain is Tetraspanin-6 (TET6) from Arabidopsis thaliana (Mouse-ear cress).